We begin with the raw amino-acid sequence, 107 residues long: Small ribosomal subunit protein uS10 (107 aa).

This sequence belongs to the universal ribosomal protein uS10 family. Part of the 30S ribosomal subunit.

In terms of biological role, involved in the binding of tRNA to the ribosomes. The sequence is that of Small ribosomal subunit protein uS10 from Deinococcus geothermalis (strain DSM 11300 / CIP 105573 / AG-3a).